Consider the following 126-residue polypeptide: Aspartate 1-decarboxylase (126 aa).

Catalysis depends on S25, which acts as the Schiff-base intermediate with substrate; via pyruvic acid. S25 is modified (pyruvic acid (Ser)). T57 is a binding site for substrate. The Proton donor role is filled by Y58. 73 to 75 is a substrate binding site; it reads GAA.

Belongs to the PanD family. In terms of assembly, heterooctamer of four alpha and four beta subunits. Requires pyruvate as cofactor. Is synthesized initially as an inactive proenzyme, which is activated by self-cleavage at a specific serine bond to produce a beta-subunit with a hydroxyl group at its C-terminus and an alpha-subunit with a pyruvoyl group at its N-terminus.

It is found in the cytoplasm. The catalysed reaction is L-aspartate + H(+) = beta-alanine + CO2. It participates in cofactor biosynthesis; (R)-pantothenate biosynthesis; beta-alanine from L-aspartate: step 1/1. In terms of biological role, catalyzes the pyruvoyl-dependent decarboxylation of aspartate to produce beta-alanine. The protein is Aspartate 1-decarboxylase of Serratia proteamaculans (strain 568).